Consider the following 696-residue polypeptide: Glycine--tRNA ligase beta subunit (696 aa).

This sequence belongs to the class-II aminoacyl-tRNA synthetase family. As to quaternary structure, tetramer of two alpha and two beta subunits.

The protein localises to the cytoplasm. It carries out the reaction tRNA(Gly) + glycine + ATP = glycyl-tRNA(Gly) + AMP + diphosphate. The protein is Glycine--tRNA ligase beta subunit of Nitratidesulfovibrio vulgaris (strain ATCC 29579 / DSM 644 / CCUG 34227 / NCIMB 8303 / VKM B-1760 / Hildenborough) (Desulfovibrio vulgaris).